The following is a 345-amino-acid chain: Protease HtpX homolog (345 aa).

Helical transmembrane passes span 6-26 (TAML…LVGG) and 27-47 (SNGM…SYWN). H130 is a Zn(2+) binding site. Residue E131 is part of the active site. H134 contributes to the Zn(2+) binding site. 2 helical membrane-spanning segments follow: residues 145 to 165 (LTAT…FMGG) and 179 to 199 (IGGL…QMAI). A Zn(2+)-binding site is contributed by E204.

It belongs to the peptidase M48B family. Zn(2+) serves as cofactor.

It localises to the cell inner membrane. This chain is Protease HtpX homolog, found in Bartonella henselae (strain ATCC 49882 / DSM 28221 / CCUG 30454 / Houston 1) (Rochalimaea henselae).